The primary structure comprises 144 residues: uncharacterized protein (144 aa).

Residues 1–16 (MRKFLIVLLLPLLVLA) form the signal peptide.

This is an uncharacterized protein from Aquifex aeolicus (strain VF5).